The chain runs to 342 residues: Terpene cyclase resF (342 aa).

A run of 5 helical transmembrane segments spans residues 5–25 (VSVV…GVFA), 81–101 (FMAQ…TEDF), 115–135 (WGVF…GVCF), 151–171 (STWI…MLIF), and 182–202 (IWGV…ASLL). N-linked (GlcNAc...) asparagine glycosylation is present at Asn-224. The next 3 membrane-spanning stretches (helical) occupy residues 229-249 (YVVA…FHLG), 269-289 (FLQI…WHEL), and 305-325 (YLLL…AWAL).

The protein belongs to the membrane-bound ascI terpene cyclase family.

The protein localises to the membrane. It functions in the pathway antifungal biosynthesis. Its function is as follows. Cyclase; part of the gene cluster that mediates the biosynthesis of the tetrahydropyranyl antifungal agent restricticin that acts as an inhibitor of CYP51 and blocks the ergosterol biosynthesis. The highly reducing polyketide synthase resH, the short chain dehydrogenase resG, the cyclase resF, the FAD-dependent monooxygenase resA and the enoylreductase resD are required to generate the first stable intermediate desmethylrestrictinol. ResH with resD biosynthesize the first polyketide chain intermediate that is reduced by resG, followed by epoxidation by resA before 6-endo cyclization via epoxide opening by resF leads to desmethylrestrictinol. The methyltransferase resE then catalyzes the C4 O-methylation of desmethylrestrictinol to produce restrictinol, and the nonribosomal peptide synthetase resC catalyzes the C3 esterification of restrictinol with glycine that leads to restricticin. The chain is Terpene cyclase resF from Aspergillus sclerotiorum.